The primary structure comprises 379 residues: Cytochrome b (379 aa).

A run of 4 helical transmembrane segments spans residues 33–53 (FGSL…FLAM), 77–98 (WLIR…FIHV), 113–133 (WNIG…GYVL), and 178–198 (FFAF…VHLL). Positions 83 and 97 each coordinate heme b. Residues His-182 and His-196 each coordinate heme b. His-201 is a binding site for a ubiquinone. A run of 4 helical transmembrane segments spans residues 226-246 (TKDL…ALFF), 288-308 (LGGV…PLLN), 320-340 (VTQV…WIGG), and 347-367 (FTTI…ILIP).

This sequence belongs to the cytochrome b family. The cytochrome bc1 complex contains 11 subunits: 3 respiratory subunits (MT-CYB, CYC1 and UQCRFS1), 2 core proteins (UQCRC1 and UQCRC2) and 6 low-molecular weight proteins (UQCRH/QCR6, UQCRB/QCR7, UQCRQ/QCR8, UQCR10/QCR9, UQCR11/QCR10 and a cleavage product of UQCRFS1). This cytochrome bc1 complex then forms a dimer. Heme b serves as cofactor.

Its subcellular location is the mitochondrion inner membrane. In terms of biological role, component of the ubiquinol-cytochrome c reductase complex (complex III or cytochrome b-c1 complex) that is part of the mitochondrial respiratory chain. The b-c1 complex mediates electron transfer from ubiquinol to cytochrome c. Contributes to the generation of a proton gradient across the mitochondrial membrane that is then used for ATP synthesis. The protein is Cytochrome b (MT-CYB) of Akodon mystax (Caparao grass mouse).